Here is a 184-residue protein sequence, read N- to C-terminus: Probable chemoreceptor glutamine deamidase CheD (184 aa).

Belongs to the CheD family.

It catalyses the reaction L-glutaminyl-[protein] + H2O = L-glutamyl-[protein] + NH4(+). Its function is as follows. Probably deamidates glutamine residues to glutamate on methyl-accepting chemotaxis receptors (MCPs), playing an important role in chemotaxis. In Rhizobium johnstonii (strain DSM 114642 / LMG 32736 / 3841) (Rhizobium leguminosarum bv. viciae), this protein is Probable chemoreceptor glutamine deamidase CheD.